The primary structure comprises 240 residues: Insulin-like growth factor-binding protein 3 receptor (240 aa).

The N-terminal stretch at 1–38 (MGNCQAGHNLHLCLAHHPPLVCATLILLLLGLSGLGLG) is a signal peptide. Residues 39 to 204 (SFLLTHRTGL…SEELALCGSR (166 aa)) lie on the Extracellular side of the membrane. 3 N-linked (GlcNAc...) asparagine glycosylation sites follow: Asn73, Asn101, and Asn167. A helical membrane pass occupies residues 205–225 (LLVLGSFLLLFCGLLCCVTAM). Residues 226–240 (CFHPRRESHWSRTRL) are Cytoplasmic-facing.

In terms of assembly, interacts with IGFBP3. Interacts with CASP8. In terms of tissue distribution, widely expressed in normal tissues but suppressed in prostate and breast tumor.

It localises to the cell membrane. Cell death receptor specific for IGFBP3, may mediate caspase-8-dependent apoptosis upon ligand binding. In Homo sapiens (Human), this protein is Insulin-like growth factor-binding protein 3 receptor (TMEM219).